Here is a 372-residue protein sequence, read N- to C-terminus: 4-hydroxy-3-methylbut-2-en-1-yl diphosphate synthase (flavodoxin) (372 aa).

Residues Cys-270, Cys-273, Cys-305, and Glu-312 each contribute to the [4Fe-4S] cluster site.

This sequence belongs to the IspG family. [4Fe-4S] cluster serves as cofactor.

It catalyses the reaction (2E)-4-hydroxy-3-methylbut-2-enyl diphosphate + oxidized [flavodoxin] + H2O + 2 H(+) = 2-C-methyl-D-erythritol 2,4-cyclic diphosphate + reduced [flavodoxin]. The protein operates within isoprenoid biosynthesis; isopentenyl diphosphate biosynthesis via DXP pathway; isopentenyl diphosphate from 1-deoxy-D-xylulose 5-phosphate: step 5/6. Converts 2C-methyl-D-erythritol 2,4-cyclodiphosphate (ME-2,4cPP) into 1-hydroxy-2-methyl-2-(E)-butenyl 4-diphosphate. The chain is 4-hydroxy-3-methylbut-2-en-1-yl diphosphate synthase (flavodoxin) from Vibrio campbellii (strain ATCC BAA-1116).